The sequence spans 829 residues: Exocyst complex component SEC10b (829 aa).

The stretch at 244-266 (RGLEVAVANLQDYCNELENRLLS) forms a coiled coil.

It belongs to the SEC10 family. The exocyst complex is composed of SEC3, SEC5, SEC6, SEC8, SEC10, EXO70A1 and EXO84B. Interacts with EXO84B. Binds to EXO70E2. Expressed in seedlings, roots, leaves and flowers.

The protein localises to the cytoplasm. It is found in the cytosol. Its subcellular location is the secreted. It localises to the extracellular exosome. In terms of biological role, component of the exocyst complex involved in the docking of exocytic vesicles with fusion sites on the plasma membrane during regulated or polarized secretion. Involved in polarized cell growth and organ morphogenesis. During cytokinesis, involved in cell plate initiation, cell plate maturation and formation of new primary cell wall. This chain is Exocyst complex component SEC10b, found in Arabidopsis thaliana (Mouse-ear cress).